A 383-amino-acid chain; its full sequence is Succinate--CoA ligase [ADP-forming] subunit beta (383 aa).

An ATP-grasp domain is found at 9-236 (KELLGRFGLR…VEAADPQEHR (228 aa)). ATP-binding positions include lysine 45, 52–54 (GRG), glutamate 91, alanine 94, and glutamate 99. The Mg(2+) site is built by asparagine 191 and aspartate 205. Substrate contacts are provided by residues asparagine 256 and 313 to 315 (GIT).

This sequence belongs to the succinate/malate CoA ligase beta subunit family. In terms of assembly, heterotetramer of two alpha and two beta subunits. The cofactor is Mg(2+).

The catalysed reaction is succinate + ATP + CoA = succinyl-CoA + ADP + phosphate. The enzyme catalyses GTP + succinate + CoA = succinyl-CoA + GDP + phosphate. Its pathway is carbohydrate metabolism; tricarboxylic acid cycle; succinate from succinyl-CoA (ligase route): step 1/1. Succinyl-CoA synthetase functions in the citric acid cycle (TCA), coupling the hydrolysis of succinyl-CoA to the synthesis of either ATP or GTP and thus represents the only step of substrate-level phosphorylation in the TCA. The beta subunit provides nucleotide specificity of the enzyme and binds the substrate succinate, while the binding sites for coenzyme A and phosphate are found in the alpha subunit. The protein is Succinate--CoA ligase [ADP-forming] subunit beta of Rubrobacter xylanophilus (strain DSM 9941 / JCM 11954 / NBRC 16129 / PRD-1).